Consider the following 351-residue polypeptide: Prostaglandin reductase 2 (351 aa).

99 to 100 (FY) provides a ligand contact to substrate. Residues 165 to 168 (GACG), K192, Y208, N231, 253 to 259 (CGQISQY), 287 to 289 (FTV), and N337 contribute to the NADP(+) site. 288–290 (TVL) contributes to the substrate binding site.

It belongs to the NADP-dependent oxidoreductase L4BD family. As to quaternary structure, monomer. Widely expressed with highest levels in adipose tissues.

Its subcellular location is the cytoplasm. The enzyme catalyses 13,14-dihydro-15-oxo-prostaglandin E2 + NAD(+) = 15-oxoprostaglandin E2 + NADH + H(+). It carries out the reaction 13,14-dihydro-15-oxo-prostaglandin E2 + NADP(+) = 15-oxoprostaglandin E2 + NADPH + H(+). It catalyses the reaction 13,14-dihydro-15-oxo-PGF2alpha + NADP(+) = 15-oxoprostaglandin F2alpha + NADPH + H(+). The catalysed reaction is 13,14-dihydro-15-oxo-prostaglandin E1 + NADP(+) = 15-oxoprostaglandin E1 + NADPH + H(+). The enzyme catalyses 13,14-dihydro-15-oxo-prostaglandin F1alpha + NADP(+) = 15-oxoprostaglandin F1alpha + NADPH + H(+). Functionally, functions as 15-oxo-prostaglandin 13-reductase and acts on 15-keto-PGE1, 15-keto-PGE2, 15-keto-PGE1-alpha and 15-keto-PGE2-alpha with highest activity towards 15-keto-PGE2. Overexpression represses transcriptional activity of PPARG and inhibits adipocyte differentiation. This is Prostaglandin reductase 2 from Mus musculus (Mouse).